The chain runs to 501 residues: Probable malate:quinone oxidoreductase (501 aa).

This sequence belongs to the MQO family. The cofactor is FAD.

It catalyses the reaction (S)-malate + a quinone = a quinol + oxaloacetate. The protein operates within carbohydrate metabolism; tricarboxylic acid cycle; oxaloacetate from (S)-malate (quinone route): step 1/1. The sequence is that of Probable malate:quinone oxidoreductase from Geobacillus kaustophilus (strain HTA426).